Consider the following 140-residue polypeptide: Alpha-lactalbumin (140 aa).

Residues 1–19 (MMSLLPLLLIGIVLPATQA) form the signal peptide. A C-type lysozyme domain is found at 20 to 140 (KDYGKCELNQ…CRENLDQWNC (121 aa)). Disulfide bonds link Cys25–Cys140, Cys47–Cys131, Cys80–Cys96, and Cys92–Cys110. Ca(2+) is bound by residues Lys98, Asp101, Asp103, Asp106, and Asp107.

As to quaternary structure, lactose synthase (LS) is a heterodimer of a catalytic component, beta1,4-galactosyltransferase (beta4Gal-T1) and a regulatory component, alpha-lactalbumin (LA). In terms of tissue distribution, mammary gland specific. Secreted in milk.

It localises to the secreted. Regulatory subunit of lactose synthase, changes the substrate specificity of galactosyltransferase in the mammary gland making glucose a good acceptor substrate for this enzyme. This enables LS to synthesize lactose, the major carbohydrate component of milk. In other tissues, galactosyltransferase transfers galactose onto the N-acetylglucosamine of the oligosaccharide chains in glycoproteins. The sequence is that of Alpha-lactalbumin (LALBA) from Trichosurus vulpecula (Brush-tailed possum).